The chain runs to 184 residues: UPF0301 protein Sden_2674 (184 aa).

The protein belongs to the UPF0301 (AlgH) family.

The chain is UPF0301 protein Sden_2674 from Shewanella denitrificans (strain OS217 / ATCC BAA-1090 / DSM 15013).